The chain runs to 131 residues: Profilin (131 aa).

The protein belongs to the profilin family. As to quaternary structure, occurs in many kinds of cells as a complex with monomeric actin in a 1:1 ratio.

It localises to the cytoplasm. The protein resides in the cytoskeleton. Functionally, binds to actin and affects the structure of the cytoskeleton. At high concentrations, profilin prevents the polymerization of actin, whereas it enhances it at low concentrations. By binding to PIP2, it inhibits the formation of IP3 and DG. The polypeptide is Profilin (Litchi chinensis (Lychee)).